The sequence spans 441 residues: Ribulose bisphosphate carboxylase/oxygenase activase, chloroplastic (441 aa).

Residue 167 to 174 participates in ATP binding; sequence VWGGKGQG.

Belongs to the RuBisCO activase family.

The protein localises to the plastid. The protein resides in the chloroplast stroma. In terms of biological role, activation of RuBisCO (ribulose-1,5-bisphosphate carboxylase/oxygenase; EC 4.1.1.39) involves the ATP-dependent carboxylation of the epsilon-amino group of lysine leading to a carbamate structure. The sequence is that of Ribulose bisphosphate carboxylase/oxygenase activase, chloroplastic (RCA1) from Phaseolus vulgaris (Kidney bean).